The following is a 233-amino-acid chain: tRNA (guanine-N(1)-)-methyltransferase (233 aa).

S-adenosyl-L-methionine is bound by residues G113 and 133-138 (VGDYVL).

The protein belongs to the RNA methyltransferase TrmD family. Homodimer.

It is found in the cytoplasm. It carries out the reaction guanosine(37) in tRNA + S-adenosyl-L-methionine = N(1)-methylguanosine(37) in tRNA + S-adenosyl-L-homocysteine + H(+). Its function is as follows. Specifically methylates guanosine-37 in various tRNAs. In Rhizobium etli (strain ATCC 51251 / DSM 11541 / JCM 21823 / NBRC 15573 / CFN 42), this protein is tRNA (guanine-N(1)-)-methyltransferase.